The following is a 239-amino-acid chain: U-scoloptoxin(11)-Sm3a (239 aa).

A signal peptide spans 1 to 16; sequence MINFLLLVLILSVLES.

It belongs to the scoloptoxin-11 family. In terms of processing, contains 9 disulfide bonds. Expressed by the venom gland.

The protein resides in the secreted. This chain is U-scoloptoxin(11)-Sm3a, found in Scolopendra morsitans (Tanzanian blue ringleg centipede).